Here is a 237-residue protein sequence, read N- to C-terminus: uncharacterized protein (237 aa).

Residues 53–70 form a helical membrane-spanning segment; sequence LIFLATVLAGLILFYFGV. Positions 85 to 155 are disordered; it reads PPIVIKPVAP…TQEKKDVKVA (71 aa). Residues 98 to 157 are a coiled coil; that stretch reads KTQESNQTTKKEVKQEEQKKEEPKKMVQKQETQEKREVKKSEKNEVKQTQEKKDVKVAKK. Composition is skewed to basic and acidic residues over residues 106-122 and 128-155; these read TKKEVKQEEQKKEEPKK and ETQEKREVKKSEKNEVKQTQEKKDVKVA. An SPOR domain is found at 165–237; it reads AANLRTYKFQ…HFKDAIFVRK (73 aa).

It is found in the membrane. This is an uncharacterized protein from Aquifex aeolicus (strain VF5).